A 501-amino-acid polypeptide reads, in one-letter code: Lysine--tRNA ligase (501 aa).

2 residues coordinate Mg(2+): Glu-412 and Glu-419.

This sequence belongs to the class-II aminoacyl-tRNA synthetase family. As to quaternary structure, homodimer. It depends on Mg(2+) as a cofactor.

The protein localises to the cytoplasm. It carries out the reaction tRNA(Lys) + L-lysine + ATP = L-lysyl-tRNA(Lys) + AMP + diphosphate. The sequence is that of Lysine--tRNA ligase from Chlorobium luteolum (strain DSM 273 / BCRC 81028 / 2530) (Pelodictyon luteolum).